Here is a 368-residue protein sequence, read N- to C-terminus: Probable endopolygalacturonase A (368 aa).

The first 18 residues, 1–18, serve as a signal peptide directing secretion; that stretch reads MRSVKLFGLAALGSLGAA. A propeptide spanning residues 19-31 is cleaved from the precursor; that stretch reads APAPSRVSDLTKR. C35 and C50 are oxidised to a cystine. 7 PbH1 repeats span residues 140–162, 167–192, 193–214, 215–235, 244–265, 273–295, and 307–352; these read LEDS…SVQA, LIDI…DISE, STGV…AINS, GENI…SIGS, VKNV…RIKT, VSQV…VIEQ, and TTGV…DITG. D207 functions as the Proton donor in the catalytic mechanism. A disulfide bridge links C209 with C225. Residue H229 is part of the active site. Residue N246 is glycosylated (N-linked (GlcNAc...) asparagine). Disulfide bonds link C335-C340 and C359-C368.

The protein belongs to the glycosyl hydrolase 28 family.

It localises to the secreted. It catalyses the reaction (1,4-alpha-D-galacturonosyl)n+m + H2O = (1,4-alpha-D-galacturonosyl)n + (1,4-alpha-D-galacturonosyl)m.. In terms of biological role, involved in maceration and soft-rotting of plant tissue. Hydrolyzes the 1,4-alpha glycosidic bonds of de-esterified pectate in the smooth region of the plant cell wall. This Aspergillus fumigatus (strain CBS 144.89 / FGSC A1163 / CEA10) (Neosartorya fumigata) protein is Probable endopolygalacturonase A (pgaA).